The sequence spans 707 residues: MARTVPLERVRNIGIAAHIDAGKTTTTERILFYSGLVHKIGEVHDGTAVTDWMAQERERGITITAAAITTRWTKRDPANPSQPLSGAPEYTINIIDTPGHVDFTIEVERSMRVLDGVIAVFDSVGGVQPQSETVWRQANRYNVPRIAFVNKMDRMGANFLKVYNQIRERLKANAVPIQLPIGAEDGFCGIVDLVRMQARIYMDEIGKDIRPAPIPEEMKDLVAEYRAKLVEAVAETDEALMEKYFAEEDLSEADLMAGLRKGTISGQIVPMLCGSAFKNKGVQMLLDAVVDYLPSPVDIPAIKGVLPDGSEVSRRASDDEPFSALAFKLMSDKYGDLTFIRVYSGVLTKGTYVLNSTKNKKERISRLVVLKADERLDVDELRAGDLGAVVGLKDTTTGDTLCDENAPVILESLFIPEPVISVAVEPKTKADIDKLSKALQALAKEDPTFRVSVDPETNQTIISGMGELHLEILVDRMLREFNVEANVGNPQVAYRETIRKPVSRVEGKFVRQSGGRGQYGHVVIDLEPAEPGTGFEFVSKIVGGVVPKEYIGPAEQGIREACESGVLAGYPLIDIRATLVDGSYHEVDSSEMAFKIAGSMALKEAARRASPTLLEPMMKVEVEVPEAFVGDVIGDINARRGQMEGMNTEGGITKVNAKVPLAEMFGYATDIRSKTQGRGTFTMEFSHYEEVPRSIAEAIIAKNKGNE.

A tr-type G domain is found at 8–297 (ERVRNIGIAA…AVVDYLPSPV (290 aa)). Residues 17–24 (AHIDAGKT), 96–100 (DTPGH), and 150–153 (NKMD) each bind GTP.

It belongs to the TRAFAC class translation factor GTPase superfamily. Classic translation factor GTPase family. EF-G/EF-2 subfamily.

It is found in the cytoplasm. Catalyzes the GTP-dependent ribosomal translocation step during translation elongation. During this step, the ribosome changes from the pre-translocational (PRE) to the post-translocational (POST) state as the newly formed A-site-bound peptidyl-tRNA and P-site-bound deacylated tRNA move to the P and E sites, respectively. Catalyzes the coordinated movement of the two tRNA molecules, the mRNA and conformational changes in the ribosome. The chain is Elongation factor G from Synechococcus sp. (strain JA-2-3B'a(2-13)) (Cyanobacteria bacterium Yellowstone B-Prime).